The chain runs to 92 residues: Regakine-1 (92 aa).

The first 21 residues, 1–21 (MRVSLAALAFLLTLAVLHSEA), serve as a signal peptide directing secretion. 2 disulfide bridges follow: Cys-32–Cys-56 and Cys-33–Cys-72.

This sequence belongs to the intercrine beta (chemokine CC) family. As to expression, plasma serum.

The protein localises to the secreted. Its function is as follows. Chemotactic activity for neutrophils and lymphocytes. Binds to heparin. The polypeptide is Regakine-1 (Bos taurus (Bovine)).